Here is a 137-residue protein sequence, read N- to C-terminus: Fluoride-specific ion channel FluC (137 aa).

Transmembrane regions (helical) follow at residues 11 to 31, 42 to 62, 75 to 95, and 107 to 127; these read IAVS…SLWF, GTLF…ALAL, LIAV…LDTF, and GFYW…GIIL. Na(+) contacts are provided by Gly-82 and Thr-85.

This sequence belongs to the fluoride channel Fluc/FEX (TC 1.A.43) family.

Its subcellular location is the cell inner membrane. The enzyme catalyses fluoride(in) = fluoride(out). Na(+) is not transported, but it plays an essential structural role and its presence is essential for fluoride channel function. Fluoride-specific ion channel. Important for reducing fluoride concentration in the cell, thus reducing its toxicity. The chain is Fluoride-specific ion channel FluC from Trichormus variabilis (strain ATCC 29413 / PCC 7937) (Anabaena variabilis).